The primary structure comprises 1271 residues: DNA-directed RNA polymerase subunit beta (1271 aa).

Belongs to the RNA polymerase beta chain family. In terms of assembly, the RNAP catalytic core consists of 2 alpha, 1 beta, 1 beta' and 1 omega subunit. When a sigma factor is associated with the core the holoenzyme is formed, which can initiate transcription.

It catalyses the reaction RNA(n) + a ribonucleoside 5'-triphosphate = RNA(n+1) + diphosphate. In terms of biological role, DNA-dependent RNA polymerase catalyzes the transcription of DNA into RNA using the four ribonucleoside triphosphates as substrates. This Acholeplasma laidlawii (strain PG-8A) protein is DNA-directed RNA polymerase subunit beta.